A 211-amino-acid polypeptide reads, in one-letter code: N-(5'-phosphoribosyl)anthranilate isomerase (211 aa).

This sequence belongs to the TrpF family.

The catalysed reaction is N-(5-phospho-beta-D-ribosyl)anthranilate = 1-(2-carboxyphenylamino)-1-deoxy-D-ribulose 5-phosphate. It functions in the pathway amino-acid biosynthesis; L-tryptophan biosynthesis; L-tryptophan from chorismate: step 3/5. The sequence is that of N-(5'-phosphoribosyl)anthranilate isomerase from Methanococcus maripaludis (strain C6 / ATCC BAA-1332).